The chain runs to 489 residues: COX3 mRNA-specific translational activator PET494 (489 aa).

It is found in the mitochondrion inner membrane. In terms of biological role, required for the expression of the mitochondrial gene for cytochrome c oxidase subunit III (COX3). This chain is COX3 mRNA-specific translational activator PET494 (PET494), found in Saccharomyces bayanus (Yeast).